The following is a 77-amino-acid chain: NADH-ubiquinone oxidoreductase chain 4L (77 aa).

A run of 2 helical transmembrane segments spans residues 18 to 38 (LMFI…LFSG) and 44 to 64 (MFFY…VVMV).

Belongs to the complex I subunit 4L family.

It is found in the mitochondrion membrane. The enzyme catalyses a ubiquinone + NADH + 5 H(+)(in) = a ubiquinol + NAD(+) + 4 H(+)(out). Its function is as follows. Core subunit of the mitochondrial membrane respiratory chain NADH dehydrogenase (Complex I) that is believed to belong to the minimal assembly required for catalysis. Complex I functions in the transfer of electrons from NADH to the respiratory chain. The immediate electron acceptor for the enzyme is believed to be ubiquinone. This Ascaris suum (Pig roundworm) protein is NADH-ubiquinone oxidoreductase chain 4L (ND4L).